Here is a 439-residue protein sequence, read N- to C-terminus: Chaperone SurA (439 aa).

An N-terminal signal peptide occupies residues 1–27 (MRRISSRLSLVLFAALSCATALFPAHA). 2 consecutive PpiC domains span residues 180 to 281 (GEEF…KLLD) and 293 to 391 (LEQT…QVEA).

The protein localises to the periplasm. It catalyses the reaction [protein]-peptidylproline (omega=180) = [protein]-peptidylproline (omega=0). Chaperone involved in the correct folding and assembly of outer membrane proteins. Recognizes specific patterns of aromatic residues and the orientation of their side chains, which are found more frequently in integral outer membrane proteins. May act in both early periplasmic and late outer membrane-associated steps of protein maturation. This is Chaperone SurA from Aromatoleum aromaticum (strain DSM 19018 / LMG 30748 / EbN1) (Azoarcus sp. (strain EbN1)).